Here is a 503-residue protein sequence, read N- to C-terminus: Aspartyl/glutamyl-tRNA(Asn/Gln) amidotransferase subunit B (503 aa).

This sequence belongs to the GatB/GatE family. GatB subfamily. In terms of assembly, heterotrimer of A, B and C subunits.

The catalysed reaction is L-glutamyl-tRNA(Gln) + L-glutamine + ATP + H2O = L-glutaminyl-tRNA(Gln) + L-glutamate + ADP + phosphate + H(+). It carries out the reaction L-aspartyl-tRNA(Asn) + L-glutamine + ATP + H2O = L-asparaginyl-tRNA(Asn) + L-glutamate + ADP + phosphate + 2 H(+). Its function is as follows. Allows the formation of correctly charged Asn-tRNA(Asn) or Gln-tRNA(Gln) through the transamidation of misacylated Asp-tRNA(Asn) or Glu-tRNA(Gln) in organisms which lack either or both of asparaginyl-tRNA or glutaminyl-tRNA synthetases. The reaction takes place in the presence of glutamine and ATP through an activated phospho-Asp-tRNA(Asn) or phospho-Glu-tRNA(Gln). The chain is Aspartyl/glutamyl-tRNA(Asn/Gln) amidotransferase subunit B from Mycolicibacterium smegmatis (strain ATCC 700084 / mc(2)155) (Mycobacterium smegmatis).